The primary structure comprises 242 residues: Biosynthetic peptidoglycan transglycosylase (242 aa).

The chain crosses the membrane as a helical span at residues Leu12–Pro31.

The protein belongs to the glycosyltransferase 51 family.

The protein localises to the cell inner membrane. It catalyses the reaction [GlcNAc-(1-&gt;4)-Mur2Ac(oyl-L-Ala-gamma-D-Glu-L-Lys-D-Ala-D-Ala)](n)-di-trans,octa-cis-undecaprenyl diphosphate + beta-D-GlcNAc-(1-&gt;4)-Mur2Ac(oyl-L-Ala-gamma-D-Glu-L-Lys-D-Ala-D-Ala)-di-trans,octa-cis-undecaprenyl diphosphate = [GlcNAc-(1-&gt;4)-Mur2Ac(oyl-L-Ala-gamma-D-Glu-L-Lys-D-Ala-D-Ala)](n+1)-di-trans,octa-cis-undecaprenyl diphosphate + di-trans,octa-cis-undecaprenyl diphosphate + H(+). It participates in cell wall biogenesis; peptidoglycan biosynthesis. Functionally, peptidoglycan polymerase that catalyzes glycan chain elongation from lipid-linked precursors. The protein is Biosynthetic peptidoglycan transglycosylase of Ectopseudomonas mendocina (strain ymp) (Pseudomonas mendocina).